The primary structure comprises 421 residues: Testin (421 aa).

One can recognise a PET domain in the interval 92–199; sequence MILTNPVAAK…GDVKLPREMD (108 aa). The tract at residues 133–164 is disordered; sequence EKQPVAGSEGAQYRKKQLAKQLPAHDQDPSKC. Residues 155–164 are compositionally biased toward basic and acidic residues; that stretch reads PAHDQDPSKC. LIM zinc-binding domains follow at residues 234-297, 299-359, and 362-421; these read YSCY…CDSE, PRCA…NHAV, and QGCH…KMMS.

The protein belongs to the prickle / espinas / testin family. As to quaternary structure, interacts via LIM domain 1 with ZYX. Interacts (via LIM domain 3) with ENAH and VASP. Interacts with ALKBH4, talin, actin, alpha-actinin, GRIP1 and PXN. Interacts (via LIM domain 2) with ACTL7A (via N-terminus). Heterodimer with ACTL7A; the heterodimer interacts with ENAH to form a heterotrimer.

Its subcellular location is the cytoplasm. The protein localises to the cell junction. The protein resides in the focal adhesion. Functionally, scaffold protein that may play a role in cell adhesion, cell spreading and in the reorganization of the actin cytoskeleton. Plays a role in the regulation of cell proliferation. May act as a tumor suppressor. This chain is Testin (TES), found in Canis lupus familiaris (Dog).